An 867-amino-acid chain; its full sequence is GATOR2 complex protein Mio (867 aa).

5 WD repeats span residues A51–N86, R100–T144, G149–Q188, I190–R228, and Q231–S272. Residues P350–S376 are compositionally biased toward low complexity. The interval P350–D378 is disordered. The C4-type zinc-finger motif lies at L739 to P777. Residues C741, C744, C771, C774, C784, C821, C824, H826, H829, H832, C843, C848, and C852 each coordinate Zn(2+). An RING-type; atypical zinc finger spans residues L778–G857.

The protein belongs to the WD repeat mio family. In terms of assembly, component of the GATOR complex consisting of mio, Nup44A/Seh1, Im11, Nplr3, Nplr2, Wdr24, Wdr59 and Sec13. Within the GATOR complex, probable component of the GATOR2 subcomplex which is likely composed of mio, Nup44A/Seh1, Wdr24, Wdr59 and Sec13. Interacts with Wdr24. Interacts with nucleoporin Nup44A/Seh1. The GATOR2 complex associates with unmet in the absence of S-adenosyl-L-methionine; the mio-Wdr24-Nup44A subcomplex is essential and sufficient for this interaction while Wdr59 and Sec13 are dispensable. This association acts as a nutrient sensor to inhibit mTORC1 signaling in the absence of methionine. Present in the oocyte.

The protein localises to the nucleus. It is found in the lysosome. In terms of biological role, an essential component of the GATOR subcomplex GATOR2 which functions as an activator of the amino acid-sensing branch of the mTORC1 signaling pathway. The two GATOR subcomplexes, GATOR1 and GATOR2, regulate the mTORC1 pathway in order to mediate metabolic homeostasis, female gametogenesis and the response to amino acid limitation and complete starvation. GATOR2 activates the mTORC1 signaling pathway through the inhibition of the GATOR1 subcomplex, controlling the switch to cell proliferation and growth under nutrient replete conditions and during female oocyte development. This component is required for activating mTORC1 specifically in germline cells to promote cell growth and maintain the oocyte fate. GATOR1 and GATOR2 act at different stages of oogenesis to regulate mTORC1 in order to control meiotic entry and promote oocyte growth and development. After exactly four mitotic cyst divisions, the GATOR1 complex members (Iml1, Nprl2 and Nprl3) down-regulate mTORC1 to slow cellular metabolism and promote the mitotic/meiotic transition. At later stages of oogenesis, the mio and Nup44A components of the GATOR2 complex inhibit GATOR1 and thus activate mTORC1 to promote meiotic progression, and drive oocyte growth and development. In addition to its role in the regulation of the mTORC1 complex, functions independently of mTORC1 to prevent the inappropriate accumulation of autolysosomes in germline tissues. The polypeptide is GATOR2 complex protein Mio (Drosophila melanogaster (Fruit fly)).